The following is a 372-amino-acid chain: MFREKLRREIEIIKNNGLYRFLRKKDDGVLDFSSNDYLCLSKHPEVIEAVKEGLKYGAGSTGSRLTSGNINHQRLEEKIAEFKETERTLVYSSGYATNVGVISALCKKGDLILSDKLNHASIIDGCKLSKADVLIYNHCDVEHLTNLIEENWGKYNNLFIVTDGVFSMDGDIAPLRDLKKIADEFNAILIIDDAHGTGVLGDGRGTLKHFNLKPSDNIVQIGTLSKAIGGLGGFVCGIEEVVEYLINTSRSFIFSTALPPHVVEGCIKAFEIIEKTDIVKKLQKNIKIANKVFKKYEFIKEDNLTPIYPFIFKEKTMEIAEHLIKNNIFCVGIRYPTVPKGLERIRVSINVGHEKEDFELLCERIKEVYSSD.

Residue R20 participates in substrate binding. 94–95 (GY) contributes to the pyridoxal 5'-phosphate binding site. H119 contacts substrate. Pyridoxal 5'-phosphate contacts are provided by residues S167, 192-195 (DDAH), and 223-226 (TLSK). K226 carries the post-translational modification N6-(pyridoxal phosphate)lysine. T337 serves as a coordination point for substrate.

The protein belongs to the class-II pyridoxal-phosphate-dependent aminotransferase family. BioF subfamily. As to quaternary structure, homodimer. Requires pyridoxal 5'-phosphate as cofactor.

It carries out the reaction 6-carboxyhexanoyl-[ACP] + L-alanine + H(+) = (8S)-8-amino-7-oxononanoate + holo-[ACP] + CO2. It functions in the pathway cofactor biosynthesis; biotin biosynthesis. Functionally, catalyzes the decarboxylative condensation of pimeloyl-[acyl-carrier protein] and L-alanine to produce 8-amino-7-oxononanoate (AON), [acyl-carrier protein], and carbon dioxide. This Methanocaldococcus jannaschii (strain ATCC 43067 / DSM 2661 / JAL-1 / JCM 10045 / NBRC 100440) (Methanococcus jannaschii) protein is Putative 8-amino-7-oxononanoate synthase (bioF).